The sequence spans 351 residues: Silk gland factor 3 (351 aa).

2 disordered regions span residues Ala-61–Arg-88 and Ser-131–Ser-154. The segment covering Asp-135–Asp-145 has biased composition (basic and acidic residues). Residues Glu-149 to Asp-223 enclose the POU-specific domain. Positions Lys-241–Thr-300 form a DNA-binding region, homeobox. The segment at Gly-314–His-351 is disordered.

This sequence belongs to the POU transcription factor family. Class-3 subfamily. Restricted to the middle silk gland.

It is found in the nucleus. Involved in the transcriptional regulation of sericin-1 gene. The polypeptide is Silk gland factor 3 (SGF3) (Bombyx mori (Silk moth)).